Here is a 312-residue protein sequence, read N- to C-terminus: Transcription initiation factor IIB (312 aa).

Residues 2–34 (SDSFCPDCKKHTEVAFDHSAGDTVCTECGLVLE) form a TFIIB-type zinc finger. The Zn(2+) site is built by C6, C9, C26, and C29. 2 tandem repeats follow at residues 115–192 (MADR…FIVK) and 216–290 (FCST…DLYP).

It belongs to the TFIIB family. As to quaternary structure, associates with TFIID-IIA (DA complex) to form TFIID-IIA-IIB (DAB-complex) which is then recognized by polymerase II. Interacts with TBP2.

It is found in the nucleus. In terms of biological role, general factor that plays a major role in the activation of eukaryotic genes transcribed by RNA polymerase II. This chain is Transcription initiation factor IIB (TFIIB), found in Oryza sativa subsp. japonica (Rice).